The chain runs to 210 residues: Thymidylate kinase (210 aa).

10–17 contacts ATP; it reads GPEGAGKS.

Belongs to the thymidylate kinase family.

It catalyses the reaction dTMP + ATP = dTDP + ADP. Phosphorylation of dTMP to form dTDP in both de novo and salvage pathways of dTTP synthesis. This is Thymidylate kinase from Pseudomonas aeruginosa (strain LESB58).